Consider the following 442-residue polypeptide: Histidinol dehydrogenase (442 aa).

The disordered stretch occupies residues 1-20 (MLNVTDLRGQTPSKSDIRRA). Residues Tyr-129, Gln-193, and Asn-218 each contribute to the NAD(+) site. Positions 241, 263, and 266 each coordinate substrate. 2 residues coordinate Zn(2+): Gln-263 and His-266. Residues Glu-332 and His-333 each act as proton acceptor in the active site. The substrate site is built by His-333, Asp-366, Glu-420, and His-425. A Zn(2+)-binding site is contributed by Asp-366. His-425 is a binding site for Zn(2+).

The protein belongs to the histidinol dehydrogenase family. Zn(2+) serves as cofactor.

The enzyme catalyses L-histidinol + 2 NAD(+) + H2O = L-histidine + 2 NADH + 3 H(+). The protein operates within amino-acid biosynthesis; L-histidine biosynthesis; L-histidine from 5-phospho-alpha-D-ribose 1-diphosphate: step 9/9. Catalyzes the sequential NAD-dependent oxidations of L-histidinol to L-histidinaldehyde and then to L-histidine. In Corynebacterium glutamicum (strain ATCC 13032 / DSM 20300 / JCM 1318 / BCRC 11384 / CCUG 27702 / LMG 3730 / NBRC 12168 / NCIMB 10025 / NRRL B-2784 / 534), this protein is Histidinol dehydrogenase.